We begin with the raw amino-acid sequence, 463 residues long: MTKPFSVLLASLLVITSTVSPLASAQQSQPLDRIAAIVDEDVVLQSELDRAVRNVKSQYAGRDNQLPPDDVLQRQVLERLVLVKLQVGRAEGSGIRVSDEELNRAIASIAQQNGTSVDGLRQKLAADGMGYADFRASVRDEIIVQRLRQSFAQSRISVSEGEVDTALAQQATTGSQYHLAHILVGLPEGATAEQIATGQKKVDGVKALIDKGELDFSAAAVRYSDSPNALEGGDLGWRSLDEIPNAFAQLIRDMQPGQVAGPLRGPSGFQLLKLVEMRDANAGGEKKVLTEYNARHILVRIGDNQTEAQAKAKIDTLRARIVGGADFQATAKESSEDTNSRGQGGDLGWFPADAFGPDFGKQVEGLTDGAVSEPFRTQAGWHIVQRVGTRQTDVSAENQRAQIRETIGRRKLEEEYNRYLQELRGEAFVSFRTGDRADADATAAPEPAAAPAAPTPPPAQPTR.

The signal sequence occupies residues 1–25 (MTKPFSVLLASLLVITSTVSPLASA). PpiC domains are found at residues 174–276 (GSQY…KLVE) and 289–388 (LTEY…QRVG). 2 disordered regions span residues 329–348 (ATAK…GDLG) and 434–463 (GDRA…QPTR). Over residues 440 to 452 (DATAAPEPAAAPA) the composition is skewed to low complexity. A compositionally biased stretch (pro residues) spans 453-463 (APTPPPAQPTR).

The protein localises to the periplasm. The enzyme catalyses [protein]-peptidylproline (omega=180) = [protein]-peptidylproline (omega=0). Functionally, chaperone involved in the correct folding and assembly of outer membrane proteins. Recognizes specific patterns of aromatic residues and the orientation of their side chains, which are found more frequently in integral outer membrane proteins. May act in both early periplasmic and late outer membrane-associated steps of protein maturation. This is Chaperone SurA from Xanthomonas campestris pv. campestris (strain 8004).